Reading from the N-terminus, the 140-residue chain is Hexon-interlacing protein (140 aa).

The stretch at Leu-100–Gln-127 forms a coiled coil.

This sequence belongs to the adenoviridae hexon-interlacing protein family. As to quaternary structure, homotrimer. Interacts with hexon protein; this interaction tethers the hexons together. Self-interacts with adjacent proteins. Interacts with kinesin light chain KLC1; this interaction leads to capsid disruption at the nuclear pore complex during virus entry into host cell.

Its subcellular location is the virion. The protein localises to the host nucleus. Functionally, structural component of the virion that acts as a cement protein on the capsid exterior and forms triskelion structures consisting of three molecules that stabilize three hexon trimers at the center of each icosahedral facet and fixes the peripentonal hexons. Dispensable for assembly. During virus entry, recruits the anterograde motor kinesin-1 to the capsid docked at the nuclear pore complex thereby subjecting the docked capsid to a pulling force. The resulting tension leads to capsid disruption, dispersion of capsid fragments toward cell periphery and eventually viral DNA entry into the host nucleus. The protein is Hexon-interlacing protein of Human adenovirus C serotype 5 (HAdV-5).